The sequence spans 83 residues: Homeobox protein DLX-2 (83 aa).

Residues 1 to 14 (STATDSSYYTNQQH) show a composition bias toward polar residues. 2 disordered regions span residues 1 to 27 (STAT…SPYA) and 63 to 83 (PYGT…LEPE).

This sequence belongs to the distal-less homeobox family. As to quaternary structure, interacts (via homeobox DNA-binding domain) with POU4F2; this interaction enhances retinal ganglion cell (RGC) differentiation.

The protein resides in the nucleus. Its function is as follows. Acts as a transcriptional activator. Activates transcription of CGA/alpha-GSU, via binding to the downstream activin regulatory element (DARE) in the gene promoter. Plays a role in terminal differentiation of interneurons, such as amacrine and bipolar cells in the developing retina. Likely to play a regulatory role in the development of the ventral forebrain. May play a role in craniofacial patterning and morphogenesis. The polypeptide is Homeobox protein DLX-2 (Dlx2) (Rattus norvegicus (Rat)).